A 982-amino-acid polypeptide reads, in one-letter code: Protein phosphatase 1 regulatory subunit 12B (982 aa).

Positions Met1–Arg24 are enriched in basic and acidic residues. The tract at residues Met1 to Gly50 is disordered. Position 29 is a phosphoserine (Ser29). 5 ANK repeats span residues Glu57 to Thr86, Asp90 to Gln119, Glu123 to Ile152, Ser216 to Val245, and Asp249 to Ile278. 4 disordered regions span residues Glu342–Ala517, Arg556–Pro579, Thr606–Glu864, and Ala918–Glu948. A compositionally biased stretch (acidic residues) spans Ser362 to Ser374. The segment covering Glu375–Glu385 has biased composition (basic and acidic residues). The span at Asn389 to Glu401 shows a compositional bias: polar residues. Positions Phe411–Ser421 are enriched in low complexity. Phosphothreonine is present on Thr445. The segment covering Ser466–Ser478 has biased composition (low complexity). The segment covering Asp482–Lys491 has biased composition (basic and acidic residues). Over residues Val623–Arg632 the composition is skewed to basic and acidic residues. Residues Lys633–Arg643 are compositionally biased toward basic residues. The residue at position 646 (Thr646) is a Phosphothreonine. Basic and acidic residues predominate over residues Glu656–Asp680. Positions Thr731 to Ser742 are enriched in low complexity. Residues Leu743–Phe755 show a composition bias toward polar residues. The segment covering Glu797–Gly807 has biased composition (basic residues). Position 808 is a phosphothreonine (Thr808). The span at Glu824–Arg836 shows a compositional bias: basic and acidic residues. Ser839 is modified (phosphoserine). Positions Gly840 to Ser849 are enriched in polar residues. Composition is skewed to basic and acidic residues over residues Tyr850–Glu864, Ala918–Asp927, and Glu933–Glu948. Ser947 carries the post-translational modification Phosphoserine.

As to quaternary structure, PP1 comprises a catalytic subunit, PPP1CA, PPP1CB or PPP1CC, and one or several targeting or regulatory subunits. PPP1R12B mediates binding to myosin. Isoform 3 and isoform 4 bind PPP1R12A, but not isoform 1 of PPP1R12B itself. Binds IL16. In terms of tissue distribution, detected in skeletal muscle, fetal and adult heart, brain, placenta, kidney, spleen, thymus, pancreas and lung. Isoform 3 and isoform 4 are heart specific.

It localises to the cytoplasm. Its subcellular location is the cytoskeleton. It is found in the stress fiber. Its function is as follows. Regulates myosin phosphatase activity. Augments Ca(2+) sensitivity of the contractile apparatus. The chain is Protein phosphatase 1 regulatory subunit 12B (PPP1R12B) from Homo sapiens (Human).